Consider the following 324-residue polypeptide: Glyoxylate/hydroxypyruvate reductase B (324 aa).

Catalysis depends on residues Arg-237 and Glu-266. Residue His-285 is the Proton donor of the active site.

It belongs to the D-isomer specific 2-hydroxyacid dehydrogenase family. GhrB subfamily. Homodimer.

The protein localises to the cytoplasm. It catalyses the reaction glycolate + NADP(+) = glyoxylate + NADPH + H(+). The catalysed reaction is (R)-glycerate + NAD(+) = 3-hydroxypyruvate + NADH + H(+). It carries out the reaction (R)-glycerate + NADP(+) = 3-hydroxypyruvate + NADPH + H(+). Functionally, catalyzes the NADPH-dependent reduction of glyoxylate and hydroxypyruvate into glycolate and glycerate, respectively. This is Glyoxylate/hydroxypyruvate reductase B from Cronobacter sakazakii (strain ATCC BAA-894) (Enterobacter sakazakii).